Consider the following 216-residue polypeptide: Protein Syd (216 aa).

This sequence belongs to the Syd family.

It is found in the cell inner membrane. In terms of biological role, interacts with the SecY protein in vivo. May bind preferentially to an uncomplexed state of SecY, thus functioning either as a chelating agent for excess SecY in the cell or as a regulatory factor that negatively controls the translocase function. In Shewanella sp. (strain MR-4), this protein is Protein Syd.